The primary structure comprises 643 residues: Mitochondrial Rho GTPase 2 (643 aa).

Residues 1–611 are Cytoplasmic-facing; sequence MMLGGKSSAG…SGRRSRNIRQ (611 aa). In terms of domain architecture, Miro 1 spans 12–179; the sequence is RTSLRVAVAG…FYFASKAVLH (168 aa). EF-hand domains are found at residues 195–230 and 315–350; these read RLRRAVQRIFNLCDHDLDGALNDAELNDFQVNCFGA and EAMDFLSGIFQLYDLDNDGALQPAELDDLFQTAPDS. 8 residues coordinate Ca(2+): D208, D210, D212, E219, D328, D330, D332, and E339. Positions 423 to 592 constitute a Miro 2 domain; that stretch reads RNVFQCFVFG…FSRIVSTAEN (170 aa). Residues 612–632 traverse the membrane as a helical segment; the sequence is LVNSSLLFVSVGTAVGFAGLA. Residues 633 to 643 lie on the Mitochondrial intermembrane side of the membrane; it reads AYRAYSARKNA.

It belongs to the mitochondrial Rho GTPase family. In terms of tissue distribution, expressed roots, rosette and cauline leaves, stems, flowers and siliques.

Its subcellular location is the mitochondrion outer membrane. Activated by calcium. In terms of biological role, calcium-binding mitochondrial GTPase involved in calcium signaling during salt stress response. May play a role in the progression of embryonic cell division, development of haploid male and female gametes, and pollen tube growth. This chain is Mitochondrial Rho GTPase 2, found in Arabidopsis thaliana (Mouse-ear cress).